The chain runs to 313 residues: Putative HTH-type transcriptional regulatory protein Msm_0453 (313 aa).

An HTH cro/C1-type domain is found at 131-189 (IKQYREEYSLSLKDLADLAHVSRATMYKYENEIVRANTETAMILEEILNTKVTLDIDLL). A DNA-binding region (H-T-H motif) is located at residues 142–161 (LKDLADLAHVSRATMYKYEN).

This is Putative HTH-type transcriptional regulatory protein Msm_0453 from Methanobrevibacter smithii (strain ATCC 35061 / DSM 861 / OCM 144 / PS).